A 281-amino-acid chain; its full sequence is ATP synthase subunit a (281 aa).

The next 6 helical transmembrane spans lie at 50–70 (FSFT…LLLV), 116–136 (FFPC…QGMI), 145–165 (HFLI…IVGF), 172–192 (FLSF…LVLL), 219–239 (VKIL…FYFI), and 246–266 (FIVL…AYVF).

This sequence belongs to the ATPase A chain family. F-type ATPases have 2 components, CF(1) - the catalytic core - and CF(0) - the membrane proton channel. CF(1) has five subunits: alpha(3), beta(3), gamma(1), delta(1), epsilon(1). CF(0) has three main subunits: a, b and c.

Its subcellular location is the mitochondrion inner membrane. Mitochondrial membrane ATP synthase (F(1)F(0) ATP synthase or Complex V) produces ATP from ADP in the presence of a proton gradient across the membrane which is generated by electron transport complexes of the respiratory chain. F-type ATPases consist of two structural domains, F(1) - containing the extramembraneous catalytic core and F(0) - containing the membrane proton channel, linked together by a central stalk and a peripheral stalk. During catalysis, ATP synthesis in the catalytic domain of F(1) is coupled via a rotary mechanism of the central stalk subunits to proton translocation. Key component of the proton channel; it may play a direct role in the translocation of protons across the membrane. This Oenothera berteroana (Bertero's evening primrose) protein is ATP synthase subunit a (ATP6).